Reading from the N-terminus, the 153-residue chain is NADPH-dependent 7-cyano-7-deazaguanine reductase (153 aa).

Positions methionine 1 to proline 30 are disordered. Cysteine 51 serves as the catalytic Thioimide intermediate. Aspartate 58 acts as the Proton donor in catalysis. Substrate-binding positions include valine 73–serine 75 and histidine 92–glutamate 93.

This sequence belongs to the GTP cyclohydrolase I family. QueF type 1 subfamily.

The protein resides in the cytoplasm. It catalyses the reaction 7-aminomethyl-7-carbaguanine + 2 NADP(+) = 7-cyano-7-deazaguanine + 2 NADPH + 3 H(+). Its pathway is tRNA modification; tRNA-queuosine biosynthesis. Catalyzes the NADPH-dependent reduction of 7-cyano-7-deazaguanine (preQ0) to 7-aminomethyl-7-deazaguanine (preQ1). The chain is NADPH-dependent 7-cyano-7-deazaguanine reductase from Methylorubrum extorquens (strain CM4 / NCIMB 13688) (Methylobacterium extorquens).